We begin with the raw amino-acid sequence, 191 residues long: uncharacterized protein (191 aa).

The protein to E.coli YecM.

This is an uncharacterized protein from Haemophilus influenzae (strain ATCC 51907 / DSM 11121 / KW20 / Rd).